Here is a 226-residue protein sequence, read N- to C-terminus: tRNA (guanine-N(7)-)-methyltransferase (226 aa).

S-adenosyl-L-methionine is bound by residues glutamate 57, glutamate 82, aspartate 109, and aspartate 132. Aspartate 132 is a catalytic residue. Residues lysine 136, aspartate 168, and 205-208 each bind substrate; that span reads TKFE.

The protein belongs to the class I-like SAM-binding methyltransferase superfamily. TrmB family.

It carries out the reaction guanosine(46) in tRNA + S-adenosyl-L-methionine = N(7)-methylguanosine(46) in tRNA + S-adenosyl-L-homocysteine. It functions in the pathway tRNA modification; N(7)-methylguanine-tRNA biosynthesis. Catalyzes the formation of N(7)-methylguanine at position 46 (m7G46) in tRNA. The protein is tRNA (guanine-N(7)-)-methyltransferase of Legionella pneumophila subsp. pneumophila (strain Philadelphia 1 / ATCC 33152 / DSM 7513).